Here is a 170-residue protein sequence, read N- to C-terminus: Helix-loop-helix protein 3 (170 aa).

Low complexity predominate over residues 1–26 (MTASTSSTPSTSTKIPSSSKSSVTKQ). 2 disordered regions span residues 1-42 (MTAS…VDQV) and 118-170 (TPSP…TETY). Positions 26 to 39 (QTKQKRNERERKRV) are basic motif; degenerate. Residues 26-79 (QTKQKRNERERKRVDQVNQGFVLLQERVPKAAGNKAKLSKVETLREAARYIQEL) form the bHLH domain. Residues 30–40 (KRNERERKRVD) are compositionally biased toward basic and acidic residues. Residues 40–79 (DQVNQGFVLLQERVPKAAGNKAKLSKVETLREAARYIQEL) form a helix-loop-helix motif region. Residues 143-157 (SHYYQESSSSSASTS) are compositionally biased toward low complexity.

In terms of assembly, efficient DNA binding requires dimerization with another bHLH protein. Forms a heterodimer with hlh-2. In terms of tissue distribution, expressed in the ADL sensory neurons.

The protein localises to the nucleus. Functionally, probable transcriptional regulator. May mediate transcriptional activation by binding to the E-box motif 5'-CANNTG-3'. Plays a role in the differentiation of the hermaphrodite-specific motor neurons (HSN) that are required for normal egg laying. Might play a role in serotonin production by regulating expression of the tryptophan hydrolase tph-1 which catalyzes serotonin synthesis, in the HSN neurons. Also plays a role in HSN axon guidance towards the vulva and the ventral nerve cord, possibly by promoting the expression of the netrin receptor unc-40. Under feeding conditions, involved in the regulation of the srh-234 chemoreceptor encoding gene expression in the ADL sensory neurons. Together with hlh-2, involved in the induction of programmed cell death in the sister cells of the serotonergic neurosecretory motor (NSM) neurons, probably through the activation of egl-1 transcription. The polypeptide is Helix-loop-helix protein 3 (Caenorhabditis elegans).